The primary structure comprises 203 residues: Meiotically up-regulated protein PB17E12.09 (203 aa).

Residues 92-177 adopt a coiled-coil conformation; that stretch reads CNRKIEGYIK…KEMQLYMTKI (86 aa).

The protein resides in the cytoplasm. In terms of biological role, has a role in meiosis and sporulation. This chain is Meiotically up-regulated protein PB17E12.09, found in Schizosaccharomyces pombe (strain 972 / ATCC 24843) (Fission yeast).